Consider the following 350-residue polypeptide: Transmembrane protein 185A (350 aa).

Transmembrane regions (helical) follow at residues L16 to I36, W41 to G61, F81 to V101, F111 to V131, I177 to L197, I211 to L231, and A240 to T260. The segment at D298–D350 is mediates interaction with MAP1B.

The protein belongs to the TMEM185 family. Interacts with MAP1B. In terms of tissue distribution, broadly expressed in brain where it is specifically expressed by neurons (at protein level). Also detected in some cells of arterioles, intestine, lung and testis (at protein level).

Its subcellular location is the cell projection. The protein localises to the dendrite. It is found in the membrane. The polypeptide is Transmembrane protein 185A (Tmem185a) (Mus musculus (Mouse)).